The primary structure comprises 638 residues: 1-deoxy-D-xylulose-5-phosphate synthase (638 aa).

Thiamine diphosphate is bound by residues histidine 71 and 112-114 (SHA). Aspartate 144 lines the Mg(2+) pocket. Residues 145-146 (GA), asparagine 173, tyrosine 284, and glutamate 365 contribute to the thiamine diphosphate site. Mg(2+) is bound at residue asparagine 173.

It belongs to the transketolase family. DXPS subfamily. As to quaternary structure, homodimer. Mg(2+) serves as cofactor. It depends on thiamine diphosphate as a cofactor.

The enzyme catalyses D-glyceraldehyde 3-phosphate + pyruvate + H(+) = 1-deoxy-D-xylulose 5-phosphate + CO2. Its pathway is metabolic intermediate biosynthesis; 1-deoxy-D-xylulose 5-phosphate biosynthesis; 1-deoxy-D-xylulose 5-phosphate from D-glyceraldehyde 3-phosphate and pyruvate: step 1/1. Its function is as follows. Catalyzes the acyloin condensation reaction between C atoms 2 and 3 of pyruvate and glyceraldehyde 3-phosphate to yield 1-deoxy-D-xylulose-5-phosphate (DXP). The protein is 1-deoxy-D-xylulose-5-phosphate synthase of Mycobacterium sp. (strain JLS).